A 142-amino-acid polypeptide reads, in one-letter code: Type 3 secretion system pilotin (142 aa).

The signal sequence occupies residues 1 to 23 (MIRHGSNKLKIFILSILLLTLSG). Cys-24 carries the N-palmitoyl cysteine lipid modification. Cys-24 carries S-diacylglycerol cysteine lipidation.

This sequence belongs to the MxiM family. Monomer. Interacts with the secretin MxiD/SctC.

The protein resides in the cell outer membrane. Involved in the synthesis of the type III secretion system (T3SS), also called injectisome, which is used to inject bacterial effector proteins into eukaryotic host cells. Pilot protein that is required for the proper localization of the secretin MxiD/SctC in the outer membrane. Also influences both MxiD/SctC multimerization and stability. Required for both Ipa translocation and tissue culture cell invasion. Binds lipids. The polypeptide is Type 3 secretion system pilotin (Shigella flexneri).